We begin with the raw amino-acid sequence, 196 residues long: ATP-dependent Clp protease proteolytic subunit (196 aa).

Serine 96 serves as the catalytic Nucleophile. Histidine 121 is a catalytic residue.

Belongs to the peptidase S14 family. In terms of assembly, fourteen ClpP subunits assemble into 2 heptameric rings which stack back to back to give a disk-like structure with a central cavity, resembling the structure of eukaryotic proteasomes.

The protein localises to the cytoplasm. It catalyses the reaction Hydrolysis of proteins to small peptides in the presence of ATP and magnesium. alpha-casein is the usual test substrate. In the absence of ATP, only oligopeptides shorter than five residues are hydrolyzed (such as succinyl-Leu-Tyr-|-NHMec, and Leu-Tyr-Leu-|-Tyr-Trp, in which cleavage of the -Tyr-|-Leu- and -Tyr-|-Trp bonds also occurs).. Cleaves peptides in various proteins in a process that requires ATP hydrolysis. Has a chymotrypsin-like activity. Plays a major role in the degradation of misfolded proteins. In Streptococcus pneumoniae (strain ATCC 700669 / Spain 23F-1), this protein is ATP-dependent Clp protease proteolytic subunit.